The primary structure comprises 372 residues: DNA replication and repair protein RecF (372 aa).

30–37 (GDNGQGKT) contributes to the ATP binding site.

This sequence belongs to the RecF family.

It localises to the cytoplasm. The RecF protein is involved in DNA metabolism; it is required for DNA replication and normal SOS inducibility. RecF binds preferentially to single-stranded, linear DNA. It also seems to bind ATP. This Ruminiclostridium cellulolyticum (strain ATCC 35319 / DSM 5812 / JCM 6584 / H10) (Clostridium cellulolyticum) protein is DNA replication and repair protein RecF.